A 327-amino-acid chain; its full sequence is Methionyl-tRNA formyltransferase (327 aa).

Residue 122–125 (SLLP) participates in (6S)-5,6,7,8-tetrahydrofolate binding.

It belongs to the Fmt family.

The enzyme catalyses L-methionyl-tRNA(fMet) + (6R)-10-formyltetrahydrofolate = N-formyl-L-methionyl-tRNA(fMet) + (6S)-5,6,7,8-tetrahydrofolate + H(+). Its function is as follows. Attaches a formyl group to the free amino group of methionyl-tRNA(fMet). The formyl group appears to play a dual role in the initiator identity of N-formylmethionyl-tRNA by promoting its recognition by IF2 and preventing the misappropriation of this tRNA by the elongation apparatus. This is Methionyl-tRNA formyltransferase from Ralstonia pickettii (strain 12J).